The primary structure comprises 145 residues: D-aminoacyl-tRNA deacylase (145 aa).

Residues 137-138 (GP) carry the Gly-cisPro motif, important for rejection of L-amino acids motif.

It belongs to the DTD family. In terms of assembly, homodimer.

It is found in the cytoplasm. It carries out the reaction glycyl-tRNA(Ala) + H2O = tRNA(Ala) + glycine + H(+). It catalyses the reaction a D-aminoacyl-tRNA + H2O = a tRNA + a D-alpha-amino acid + H(+). In terms of biological role, an aminoacyl-tRNA editing enzyme that deacylates mischarged D-aminoacyl-tRNAs. Also deacylates mischarged glycyl-tRNA(Ala), protecting cells against glycine mischarging by AlaRS. Acts via tRNA-based rather than protein-based catalysis; rejects L-amino acids rather than detecting D-amino acids in the active site. By recycling D-aminoacyl-tRNA to D-amino acids and free tRNA molecules, this enzyme counteracts the toxicity associated with the formation of D-aminoacyl-tRNA entities in vivo and helps enforce protein L-homochirality. The protein is D-aminoacyl-tRNA deacylase of Rhodopirellula baltica (strain DSM 10527 / NCIMB 13988 / SH1).